Consider the following 314-residue polypeptide: N-alpha-acetyltransferase 80 (314 aa).

Residues 90–243 form the N-acetyltransferase domain; sequence LEPVHCRPEL…TTVLRAFSKP (154 aa). Substrate is bound by residues arginine 113 and 118–121; that span reads RLHS. Residues 169–171, 177–182, and glutamine 207 contribute to the acetyl-CoA site; these read VVV and GRGFGR. A disordered region spans residues 260–295; sequence VPRSSKGPPLPPPPPLPQSLTASPPPSPEPLPQSPL. The segment covering 267-292 has biased composition (pro residues); it reads PPLPPPPPLPQSLTASPPPSPEPLPQ.

Belongs to the acetyltransferase family.

Its subcellular location is the cytoplasm. It localises to the cytosol. It catalyses the reaction N-terminal L-aspartyl-L-aspartyl-L-aspartyl-[protein] + acetyl-CoA = N-terminal N-acetyl-L-aspartyl-L-aspartyl-L-aspartyl-[protein] + CoA + H(+). The catalysed reaction is N-terminal L-glutamyl-L-glutamyl-L-glutamyl-[protein] + acetyl-CoA = N-terminal N-acetyl-L-glutamyl-L-glutamyl-L-glutamyl-[protein] + CoA + H(+). Its function is as follows. N-alpha-acetyltransferase that specifically mediates the acetylation of the acidic amino terminus of processed forms of beta- and gamma-actin (ACTB and ACTG, respectively). N-terminal acetylation of processed beta- and gamma-actin regulates actin filament depolymerization and elongation. In vivo, preferentially displays N-terminal acetyltransferase activity towards acid N-terminal sequences starting with Asp-Asp-Asp and Glu-Glu-Glu. In vitro, shows high activity towards Met-Asp-Glu-Leu and Met-Asp-Asp-Asp. May act as a tumor suppressor. The protein is N-alpha-acetyltransferase 80 of Mus musculus (Mouse).